The chain runs to 353 residues: 2,4-diaminopentanoate dehydrogenase (353 aa).

The protein belongs to the DapB family. Homodimer.

It carries out the reaction (2R,4S)-2,4-diaminopentanoate + NAD(+) + H2O = (2R)-2-amino-4-oxopentanoate + NH4(+) + NADH + H(+). The catalysed reaction is (2R,4S)-2,4-diaminopentanoate + NADP(+) + H2O = (2R)-2-amino-4-oxopentanoate + NH4(+) + NADPH + H(+). With respect to regulation, inhibited by p-chloromercuribenzoate, iodoacetate and N-ethylmaleimide. In terms of biological role, involved in the ornithine fermentation pathway. Catalyzes the oxidative deamination of (2R,4S)-2,4-diaminopentanoate (DAP) to yield 2-amino-4-ketopentanoate (AKP). The sequence is that of 2,4-diaminopentanoate dehydrogenase from Acetoanaerobium sticklandii (strain ATCC 12662 / DSM 519 / JCM 1433 / CCUG 9281 / NCIMB 10654 / HF) (Clostridium sticklandii).